A 493-amino-acid chain; its full sequence is MDTKLYIDGQWVNSSSGKTVDKYSPVTGQVIGRFEAATRDDVDRAIDAAEDAFWAWNDLGSVERSKIIYRAKELIEKNRAELENIIMEENGKPVKEAKEEVDGVIDQIQYYAEWARKLNGEVVEGTSSHRKIFQYKVPYGIVVALTPWNFPAGMVARKLAPALLTGNTVVLKPSSDTPGSAEWIVRKFVEAGVPKGVLNFITGRGSEIGDYIVEHKKVNLITMTGSTATGQRIMQKASANMAKLILELGGKAPFMVWKDADMDNALKTLLWAKYWNAGQSCIAAERLYVHEDIYDTFMSRFVELSRKLALGDPKNADMGPLINKGALQATSEIVEEAKESGAKILFGGSQPSLSGPYRNGYFFLPTIIGNADQKSKIFQEEIFAPVIGARKISSVEEMYDLANDSKYGLASYLFTKDPNIIFEASERIRFGELYVNMPGPEASQGYHTGFRMTGQAGEGSKYGISEYLKLKNIYVDYSGKPLHINTVRDDLFQ.

The stretch at 70-92 (RAKELIEKNRAELENIIMEENGK) forms a coiled coil. NADP(+) is bound by residues 146–149 (TPWN), R157, 172–176 (KPSSD), 204–210 (RGSEIGD), 225–248 (GSTA…ILEL), C281, and 381–383 (EIF). Residues N149 and R157 each contribute to the substrate site. E247 serves as the catalytic Proton acceptor. C281 serves as a coordination point for substrate. C281 functions as the Proton donor in the catalytic mechanism.

Belongs to the aldehyde dehydrogenase family. Glyceraldehyde dehydrogenase subfamily. As to quaternary structure, homotetramer. Dimer of dimers.

The catalysed reaction is D-glyceraldehyde + NADP(+) + H2O = (R)-glycerate + NADPH + 2 H(+). Its pathway is carbohydrate degradation; glycolysis. With respect to regulation, inhibited by calcium, cadmium, copper and mercury ions. Stable for 2 hours at 60 degrees Celsius but activity is decreased to less than 50 percent within 20 minutes at 80 degrees Celsius. Two folds activity enhancement in the presence of 1 mM glutathione, DTT, or 2-mercaptoethanol. Complete activity inhibition by thiol-modifying reagents such as p-chloromercuribenzoic acid or p-hydroxy-mercuribenzoic acid. Functionally, NADP-dependent dehydrogenase of the nED (non-phosphorylated Entner-Doudoroff) pathway with highest activity towards glyceraldehydes (e.g. D,L-glyceraldehyde and D-glyceraldehyde), to a lesser extent towards D,L-glyceraldehyde-3-phosphate and glycolaldehyde, but no activity towards aliphatic or aromatic aldehydes. The sequence is that of D-glyceraldehyde dehydrogenase (NADP(+)) from Thermoplasma acidophilum (strain ATCC 25905 / DSM 1728 / JCM 9062 / NBRC 15155 / AMRC-C165).